The sequence spans 196 residues: Probable GTP-binding protein EngB (196 aa).

The region spanning 22–195 (KLPEVALAGR…WNWIESITKV (174 aa)) is the EngB-type G domain. Residues 30 to 37 (GRSNVGKS), 57 to 61 (GKTQT), 75 to 78 (DVPG), 142 to 145 (TKID), and 174 to 176 (FSA) contribute to the GTP site. Mg(2+) contacts are provided by serine 37 and threonine 59.

It belongs to the TRAFAC class TrmE-Era-EngA-EngB-Septin-like GTPase superfamily. EngB GTPase family. Requires Mg(2+) as cofactor.

In terms of biological role, necessary for normal cell division and for the maintenance of normal septation. This chain is Probable GTP-binding protein EngB, found in Ligilactobacillus salivarius (strain UCC118) (Lactobacillus salivarius).